Consider the following 149-residue polypeptide: Transcriptional repressor NrdR (149 aa).

A zinc finger spans residues 3–34; it reads CPFCTAVDTKVIDSRLVGDGSQVRRRRQCLVC. Residues 49–139 form the ATP-cone domain; sequence PRVVKSDEIR…VYRSFEDVRD (91 aa).

Belongs to the NrdR family. It depends on Zn(2+) as a cofactor.

Functionally, negatively regulates transcription of bacterial ribonucleotide reductase nrd genes and operons by binding to NrdR-boxes. The chain is Transcriptional repressor NrdR from Proteus mirabilis (strain HI4320).